The primary structure comprises 729 residues: MSKFIEPSVEEIKLEKVYQDMGLSDQEYEKVCDILGRQPNFTETGIFSVMWSEHCSYKHSKPFLKQFPTSGDHVLMGPGEGAGVVDIGDNQAVVFKVESHNHPSAIEPYQGAATGVGGIIRDIVSIGARPINLLNSLRFGELDNKQNQRLLKGVVKGIGGYGNCIGIPTTAGEIEFDERYDGNPLVNAMCVGVINHDMIQKGTAKGVGNSVIYVGLKTGRDGIHGATFASEELTEESESKRPSVQIGDPFVGKKLMEATLEAITFDELVGIQDMGAAGLTSSSSEMAAKGGSGLHLRLEQVPTREPGISPYEMMLSETQERMLLVVEKGTEQKFLDLFDKHELDSAVIGEVTDTNRFVLTYDDEVYADIPVEPLADEAPVYILEGEEKDYNTSKNDYTHIDVKDTFFKLLKHPTIASKHYLYDQYDQQVGANTIIKPGLQASVVRVEGTNKAIASTIDGEARYVYNNPYEGGKMVVAEAYRNLIAVGATPLAMTDCLNYGSPEKKEIYQQLIDSTKGMAEACDILKTPVVSGNVSLYNETKGTSIFPTPVVGMVGLIENVNYLNDFEPQVGDKLYLIGDTKDDFGGSQLEKLIYGKVNHEFESLDLSSEVEKGESIKTAIREGLLSHVQTVGKGGLLITLAKLSAHYGLGLKSSIDITNAQLFSETQGRYVVSVKSGKTLNIDNAIEIGLLTDSDNFKVTTPYTEISENVSDIKQIWEGAIAQCLTTQD.

His54 is a catalytic residue. Residues Tyr57 and Lys96 each contribute to the ATP site. Glu98 lines the Mg(2+) pocket. Substrate is bound by residues 99-102 (SHNH) and Arg121. His100 functions as the Proton acceptor in the catalytic mechanism. Residue Asp122 coordinates Mg(2+). Residue Gln245 participates in substrate binding. Residue Asp273 coordinates Mg(2+). 317–319 (ETQ) provides a ligand contact to substrate. The ATP site is built by Asp495 and Gly532. Asn533 is a Mg(2+) binding site. Substrate is bound at residue Ser535.

This sequence belongs to the FGAMS family. In terms of assembly, monomer. Part of the FGAM synthase complex composed of 1 PurL, 1 PurQ and 2 PurS subunits.

It localises to the cytoplasm. It carries out the reaction N(2)-formyl-N(1)-(5-phospho-beta-D-ribosyl)glycinamide + L-glutamine + ATP + H2O = 2-formamido-N(1)-(5-O-phospho-beta-D-ribosyl)acetamidine + L-glutamate + ADP + phosphate + H(+). It participates in purine metabolism; IMP biosynthesis via de novo pathway; 5-amino-1-(5-phospho-D-ribosyl)imidazole from N(2)-formyl-N(1)-(5-phospho-D-ribosyl)glycinamide: step 1/2. Functionally, part of the phosphoribosylformylglycinamidine synthase complex involved in the purines biosynthetic pathway. Catalyzes the ATP-dependent conversion of formylglycinamide ribonucleotide (FGAR) and glutamine to yield formylglycinamidine ribonucleotide (FGAM) and glutamate. The FGAM synthase complex is composed of three subunits. PurQ produces an ammonia molecule by converting glutamine to glutamate. PurL transfers the ammonia molecule to FGAR to form FGAM in an ATP-dependent manner. PurS interacts with PurQ and PurL and is thought to assist in the transfer of the ammonia molecule from PurQ to PurL. The chain is Phosphoribosylformylglycinamidine synthase subunit PurL from Staphylococcus aureus (strain USA300).